Here is a 360-residue protein sequence, read N- to C-terminus: UDP-N-acetylglucosamine--N-acetylmuramyl-(pentapeptide) pyrophosphoryl-undecaprenol N-acetylglucosamine transferase (360 aa).

Residues Ser198 and Gln289 each contribute to the UDP-N-acetyl-alpha-D-glucosamine site.

Belongs to the glycosyltransferase 28 family. MurG subfamily.

It localises to the cell membrane. It catalyses the reaction Mur2Ac(oyl-L-Ala-gamma-D-Glu-L-Lys-D-Ala-D-Ala)-di-trans,octa-cis-undecaprenyl diphosphate + UDP-N-acetyl-alpha-D-glucosamine = beta-D-GlcNAc-(1-&gt;4)-Mur2Ac(oyl-L-Ala-gamma-D-Glu-L-Lys-D-Ala-D-Ala)-di-trans,octa-cis-undecaprenyl diphosphate + UDP + H(+). It participates in cell wall biogenesis; peptidoglycan biosynthesis. Its function is as follows. Cell wall formation. Catalyzes the transfer of a GlcNAc subunit on undecaprenyl-pyrophosphoryl-MurNAc-pentapeptide (lipid intermediate I) to form undecaprenyl-pyrophosphoryl-MurNAc-(pentapeptide)GlcNAc (lipid intermediate II). This Streptococcus pyogenes serotype M12 (strain MGAS2096) protein is UDP-N-acetylglucosamine--N-acetylmuramyl-(pentapeptide) pyrophosphoryl-undecaprenol N-acetylglucosamine transferase.